A 184-amino-acid polypeptide reads, in one-letter code: MANKALILLAVLFCAQAVLGVTIISKSEWGGRSATSKTSLANYLSYAVIHHTAGNYCSTKAACITQLQNIQAYHMDSLGWADIGYNFLIGGDGNVYEGRGWNVMGAHATNWNSKSIGISFLGNYNTNTLTSAQITAAKGLLSDAVSRGQIVSGYILYGHRQVGSTECPGTNIWNEIRTWSNWKA.

The signal sequence occupies residues 1 to 20; the sequence is MANKALILLAVLFCAQAVLG. The N-acetylmuramoyl-L-alanine amidase domain maps to 45-169; the sequence is SYAVIHHTAG…RQVGSTECPG (125 aa). Zn(2+) is bound at residue H50. The cysteines at positions 57 and 63 are disulfide-linked. H159 and C167 together coordinate Zn(2+).

The protein belongs to the N-acetylmuramoyl-L-alanine amidase 2 family. Zn(2+) is required as a cofactor. Constitutively expressed at high level in gut, in addition to the induced expression in fat body.

It is found in the secreted. It carries out the reaction Hydrolyzes the link between N-acetylmuramoyl residues and L-amino acid residues in certain cell-wall glycopeptides.. Its function is as follows. N-acetylmuramyl-L-alanine amidase involved in innate immunity by degrading bacterial peptidoglycans (PGN). Probably plays a scavenger role by digesting biologically active PGN into biologically inactive fragments. Has no direct bacteriolytic activity. This is Peptidoglycan-recognition protein SC2 (PGRP-SC2) from Drosophila melanogaster (Fruit fly).